A 320-amino-acid polypeptide reads, in one-letter code: Probable 5-dehydro-4-deoxyglucarate dehydratase (320 aa).

It belongs to the DapA family.

It carries out the reaction 5-dehydro-4-deoxy-D-glucarate + H(+) = 2,5-dioxopentanoate + CO2 + H2O. It participates in carbohydrate acid metabolism; D-glucarate degradation; 2,5-dioxopentanoate from D-glucarate: step 2/2. The polypeptide is Probable 5-dehydro-4-deoxyglucarate dehydratase (Streptomyces griseus subsp. griseus (strain JCM 4626 / CBS 651.72 / NBRC 13350 / KCC S-0626 / ISP 5235)).